A 66-amino-acid polypeptide reads, in one-letter code: Large ribosomal subunit protein uL29 (66 aa).

Belongs to the universal ribosomal protein uL29 family.

The chain is Large ribosomal subunit protein uL29 from Ruegeria sp. (strain TM1040) (Silicibacter sp.).